Here is a 119-residue protein sequence, read N- to C-terminus: 5-hydroxyisourate hydrolase (119 aa).

Positions 10, 48, and 116 each coordinate substrate.

It belongs to the transthyretin family. 5-hydroxyisourate hydrolase subfamily. Homotetramer.

The enzyme catalyses 5-hydroxyisourate + H2O = 5-hydroxy-2-oxo-4-ureido-2,5-dihydro-1H-imidazole-5-carboxylate + H(+). Its pathway is purine metabolism; urate degradation; (S)-allantoin from urate: step 2/3. Functionally, catalyzes the hydrolysis of 5-hydroxyisourate (HIU) to 2-oxo-4-hydroxy-4-carboxy-5-ureidoimidazoline (OHCU). In Deinococcus radiodurans (strain ATCC 13939 / DSM 20539 / JCM 16871 / CCUG 27074 / LMG 4051 / NBRC 15346 / NCIMB 9279 / VKM B-1422 / R1), this protein is 5-hydroxyisourate hydrolase.